The primary structure comprises 224 residues: Putative ankyrin repeat protein R845 (224 aa).

8 ANK repeats span residues 1-14 (MVEYLVSLGADVRS), 15-44 (NYDHAIKSAFENGHLQVIKYLISLGSDVSM), 46-74 (YDYILLRASRNGYIDVVKYLIEQGVDPRT), 75-104 (NNDKAVRKASKNGRLEIVEYLVTLGADIRI), 105-134 (DNDSAVRWASKNGHIKTVEFLVAKGADIRA), 136-164 (NDYSLRHSSKHGHIKMVEYLVAQGADVRA), 165-194 (DNDYAIKWASGKGHLEVVKYLVEKGADFRA), and 196-224 (NDCAVKWASQTGRVEIVEYLVSKGAVCPY).

The chain is Putative ankyrin repeat protein R845 from Acanthamoeba polyphaga mimivirus (APMV).